Consider the following 329-residue polypeptide: Putative L-ascorbate peroxidase 6 (329 aa).

The active-site Proton acceptor is histidine 123. Histidine 244 contributes to the heme b binding site.

This sequence belongs to the peroxidase family. Ascorbate peroxidase subfamily. The cofactor is heme b.

It carries out the reaction L-ascorbate + H2O2 = L-dehydroascorbate + 2 H2O. Plays a key role in hydrogen peroxide removal. The polypeptide is Putative L-ascorbate peroxidase 6 (APX6) (Arabidopsis thaliana (Mouse-ear cress)).